The primary structure comprises 130 residues: Small ribosomal subunit protein uS9 (130 aa).

Belongs to the universal ribosomal protein uS9 family.

This Pseudomonas putida (strain ATCC 700007 / DSM 6899 / JCM 31910 / BCRC 17059 / LMG 24140 / F1) protein is Small ribosomal subunit protein uS9.